The following is a 587-amino-acid chain: MELLIKQISAFVEDVFEQKGYDKKYGMVTVSDRPDLCQFQCNGALPAAKEYKKAPIQIANDLLPALKNVEIFEEITIAGPGFININVKDSFLAAYVNEMYGSEKLGLEEPAEPQTIIIDYGGANVAKPLHVGHLRAAIIGESLKRISRFVGHKVIGDVHLGDWGLQMGMVISELRRRSPHLPYFDESYEGEYPAEAPFTIDELEDIYPAASKLAKSDAAAMEEAQQATAELQKGRRGYMALWQHILNVSVADLKKGYGNLNVDFDLWNGESDCQKYIDVMVDYLKKNNYTSFSDGLLIVDVAKETDNHVIPPFIVLKTDGSSLYSTTDLATIWERVQDYDPDQIIYVVDKRQELHFEQVFRCAKKTKIAGEDLTLKFLGFGTMNGKDGKPFKTREGGVMRLQDLIQIIKDAVYNKLQENEAIDPSEVDEISRKVGLAALKYGDLSNQITKDYVFDIDRFASFEGNTGPYILYTIVRIKSILRRIAAEGFQASDKIGVPHSDVERSLLLKLSRFNETVEFSFVNHSPNRICDYIYDLANTFNKFYHDTKIISETEFEKKSSWINLITLTMNVLETCLELLGIEAPEKM.

A 'HIGH' region motif is present at residues 123 to 133 (ANVAKPLHVGH).

It belongs to the class-I aminoacyl-tRNA synthetase family. As to quaternary structure, monomer.

It localises to the cytoplasm. It catalyses the reaction tRNA(Arg) + L-arginine + ATP = L-arginyl-tRNA(Arg) + AMP + diphosphate. This is Arginine--tRNA ligase from Alkaliphilus oremlandii (strain OhILAs) (Clostridium oremlandii (strain OhILAs)).